The primary structure comprises 233 residues: Small ribosomal subunit protein uS2 (233 aa).

This sequence belongs to the universal ribosomal protein uS2 family.

This is Small ribosomal subunit protein uS2 from Clostridium beijerinckii (strain ATCC 51743 / NCIMB 8052) (Clostridium acetobutylicum).